Consider the following 361-residue polypeptide: Glyceraldehyde-3-phosphate dehydrogenase, glycosomal (361 aa).

Residues 13 to 14 (RI), Asp-39, and Arg-93 contribute to the NAD(+) site. D-glyceraldehyde 3-phosphate contacts are provided by residues 166–168 (SCT), Thr-198, 227–228 (TG), and Arg-250. Residue Cys-167 is the Nucleophile of the active site. An NAD(+)-binding site is contributed by Asn-336. The Microbody targeting signal motif lies at 359-361 (SKL).

Belongs to the glyceraldehyde-3-phosphate dehydrogenase family. As to quaternary structure, homotetramer.

The protein localises to the glycosome. It catalyses the reaction D-glyceraldehyde 3-phosphate + phosphate + NAD(+) = (2R)-3-phospho-glyceroyl phosphate + NADH + H(+). Its pathway is carbohydrate degradation; glycolysis; pyruvate from D-glyceraldehyde 3-phosphate: step 1/5. This is Glyceraldehyde-3-phosphate dehydrogenase, glycosomal (GAPDG) from Crithidia fasciculata.